Here is a 129-residue protein sequence, read N- to C-terminus: Lysozyme C-1/C-2 (129 aa).

The C-type lysozyme domain maps to 1-129 (KVFERCELAR…VSSYVEGCTL (129 aa)). Cystine bridges form between cysteine 6–cysteine 127, cysteine 30–cysteine 115, cysteine 65–cysteine 81, and cysteine 77–cysteine 95. Catalysis depends on residues glutamate 35 and aspartate 53.

It belongs to the glycosyl hydrolase 22 family. In terms of assembly, monomer.

The enzyme catalyses Hydrolysis of (1-&gt;4)-beta-linkages between N-acetylmuramic acid and N-acetyl-D-glucosamine residues in a peptidoglycan and between N-acetyl-D-glucosamine residues in chitodextrins.. Functionally, lysozymes have primarily a bacteriolytic function; those in tissues and body fluids are associated with the monocyte-macrophage system and enhance the activity of immunoagents. This is Lysozyme C-1/C-2 from Axis axis (Axis deer).